A 235-amino-acid polypeptide reads, in one-letter code: Thiamine-phosphate synthase (235 aa).

Residues 50–54 and Asn91 contribute to the 4-amino-2-methyl-5-(diphosphooxymethyl)pyrimidine site; that span reads QLRDK. Residues Asp92 and Asp111 each coordinate Mg(2+). Ser130 serves as a coordination point for 4-amino-2-methyl-5-(diphosphooxymethyl)pyrimidine. 160–162 is a 2-[(2R,5Z)-2-carboxy-4-methylthiazol-5(2H)-ylidene]ethyl phosphate binding site; the sequence is TPT. 4-amino-2-methyl-5-(diphosphooxymethyl)pyrimidine is bound at residue Lys163. Gly191 lines the 2-[(2R,5Z)-2-carboxy-4-methylthiazol-5(2H)-ylidene]ethyl phosphate pocket.

The protein belongs to the thiamine-phosphate synthase family. Mg(2+) is required as a cofactor.

It carries out the reaction 2-[(2R,5Z)-2-carboxy-4-methylthiazol-5(2H)-ylidene]ethyl phosphate + 4-amino-2-methyl-5-(diphosphooxymethyl)pyrimidine + 2 H(+) = thiamine phosphate + CO2 + diphosphate. The catalysed reaction is 2-(2-carboxy-4-methylthiazol-5-yl)ethyl phosphate + 4-amino-2-methyl-5-(diphosphooxymethyl)pyrimidine + 2 H(+) = thiamine phosphate + CO2 + diphosphate. The enzyme catalyses 4-methyl-5-(2-phosphooxyethyl)-thiazole + 4-amino-2-methyl-5-(diphosphooxymethyl)pyrimidine + H(+) = thiamine phosphate + diphosphate. It functions in the pathway cofactor biosynthesis; thiamine diphosphate biosynthesis; thiamine phosphate from 4-amino-2-methyl-5-diphosphomethylpyrimidine and 4-methyl-5-(2-phosphoethyl)-thiazole: step 1/1. Functionally, condenses 4-methyl-5-(beta-hydroxyethyl)thiazole monophosphate (THZ-P) and 2-methyl-4-amino-5-hydroxymethyl pyrimidine pyrophosphate (HMP-PP) to form thiamine monophosphate (TMP). In Mycobacterium leprae (strain TN), this protein is Thiamine-phosphate synthase.